A 1143-amino-acid chain; its full sequence is ATP-dependent helicase/deoxyribonuclease subunit B (1143 aa).

The region spanning 1-274 is the UvrD-like helicase ATP-binding domain; the sequence is MNYMHLGRAG…YGQTVKFQST (274 aa). 7–14 provides a ligand contact to ATP; sequence GRAGTGKT. The UvrD-like helicase C-terminal domain maps to 267–565; that stretch reads QTVKFQSTGL…RFSLVPPSLD (299 aa). Cysteine 782, cysteine 1104, cysteine 1107, and cysteine 1113 together coordinate [4Fe-4S] cluster.

The protein belongs to the helicase family. AddB/RexB type 1 subfamily. In terms of assembly, heterodimer of AddA and AddB. Requires Mg(2+) as cofactor. The cofactor is [4Fe-4S] cluster.

Its function is as follows. The heterodimer acts as both an ATP-dependent DNA helicase and an ATP-dependent, dual-direction single-stranded exonuclease. Recognizes the chi site generating a DNA molecule suitable for the initiation of homologous recombination. The AddB subunit has 5' -&gt; 3' nuclease activity but not helicase activity. This chain is ATP-dependent helicase/deoxyribonuclease subunit B, found in Exiguobacterium sibiricum (strain DSM 17290 / CCUG 55495 / CIP 109462 / JCM 13490 / 255-15).